An 833-amino-acid polypeptide reads, in one-letter code: Zinc transporter ZIP10 (833 aa).

An N-terminal signal peptide occupies residues 1-25; the sequence is MKVHIHTKFCLICLLTFIFHHCNHC. The span at 30–48 shows a compositional bias: basic and acidic residues; that stretch reads DHGPEELHRHHRGMTESES. Disordered stretches follow at residues 30-54 and 137-167; these read DHGP…FSVQ and AENH…IKAD. Residues 137 to 147 show a composition bias toward polar residues; it reads AENHTTTSVTS. The span at 152–167 shows a compositional bias: basic and acidic residues; the sequence is KCDPEKEAAELPIKAD. 2 N-linked (GlcNAc...) asparagine glycosylation sites follow: Asn-191 and Asn-198. Residues 200–209 are compositionally biased toward basic and acidic residues; that stretch reads SVAHSEHGEP. Disordered regions lie at residues 200–257 and 271–335; these read SVAH…NHDH and RVHS…EDDR. An N-linked (GlcNAc...) asparagine glycan is attached at Asn-218. The span at 229–241 shows a compositional bias: basic residues; sequence VKVRRKEKGKRKK. Basic and acidic residues-rich tracts occupy residues 281-315 and 326-335; these read HLPE…EAPH and SHKDQSEDDR. Asn-341 carries N-linked (GlcNAc...) asparagine glycosylation. The next 2 helical transmembrane spans lie at 413-433 and 440-460; these read IISI…VPII and FLLT…ALLH. Positions 466–485 are disordered; that stretch reads QGGHDHSHQHTHGHGHSHGH. Residues 497-517 form a helical membrane-spanning segment; the sequence is VLKGLVALGGIYLLFIIEHCI. Phosphothreonine is present on residues Thr-538 and Thr-555. Phosphoserine is present on Ser-593. Transmembrane regions (helical) follow at residues 689–709, 734–754, 761–781, and 803–823; these read AIGA…IAVF, IVYN…GTAV, ITLW…LVDM, and FILQ…IALY.

This sequence belongs to the ZIP transporter (TC 2.A.5) family. Interacts with SLC39A6. This interaction triggers cells to undergo EMT and mitosis. Found in a complex with SLC39A6, SLC39A10 and with the 'Ser-727' phosphorylated form of STAT3 throughout mitosis. Found in a complex with SLC39A6, SLC39A10 and with NCAM1; this complex controls NCAM1 phosphorylation and integration into focal adhesion complexes during epithelial-tomesenchymal transition. Found in a complex with SLC39A6, SLC39A10 and with GSK3B that controls NCAM1 phosphorylation. In terms of processing, undergoes N-terminal ectodomain shedding. As to expression, expressed in the liver, kidney and brain.

The protein localises to the cell membrane. The protein resides in the apical cell membrane. It carries out the reaction Zn(2+)(in) = Zn(2+)(out). Its function is as follows. Zinc-influx transporter. When associated with SLC39A6, the heterodimer formed by SLC39A10 and SLC39A6 mediates cellular zinc uptake to trigger cells to undergo epithelial-to-mesenchymal transition (EMT). mediates cellular zinc uptake to trigger cells to undergo epithelial-to-mesenchymal transition (EMT). SLC39A10-SLC39A6 heterodimers play also an essentiel role in initiating mitosis by importing zinc into cells to initiate a pathway resulting in the onset of mitosis. Plays an important for both mature B-cell maintenance and humoral immune responses. When associated with SLC39A10, the heterodimer controls NCAM1 phosphorylation and integration into focal adhesion complexes during EMT. This is Zinc transporter ZIP10 from Mus musculus (Mouse).